A 368-amino-acid polypeptide reads, in one-letter code: Isopentenyl-diphosphate delta-isomerase (368 aa).

7 to 8 (RK) contributes to the substrate binding site. FMN is bound by residues Thr-65, 66-68 (GMT), Ser-96, and Asn-125. Residue 96 to 98 (SQR) participates in substrate binding. Gln-160 contributes to the substrate binding site. Glu-161 lines the Mg(2+) pocket. FMN is bound by residues Lys-193, Ser-218, Thr-223, 275 to 277 (GIR), and 296 to 297 (AL).

The protein belongs to the IPP isomerase type 2 family. In terms of assembly, homooctamer. Dimer of tetramers. Requires FMN as cofactor. The cofactor is NADPH. It depends on Mg(2+) as a cofactor.

The protein localises to the cytoplasm. The catalysed reaction is isopentenyl diphosphate = dimethylallyl diphosphate. Involved in the biosynthesis of isoprenoids. Catalyzes the 1,3-allylic rearrangement of the homoallylic substrate isopentenyl (IPP) to its allylic isomer, dimethylallyl diphosphate (DMAPP). The sequence is that of Isopentenyl-diphosphate delta-isomerase from Saccharolobus islandicus (strain L.S.2.15 / Lassen #1) (Sulfolobus islandicus).